Reading from the N-terminus, the 365-residue chain is Chorismate synthase (365 aa).

Arg48 contributes to the NADP(+) binding site. FMN is bound by residues 125 to 127 (RSS), 238 to 239 (NA), Gly278, 293 to 297 (KPTSS), and Arg319.

This sequence belongs to the chorismate synthase family. As to quaternary structure, homotetramer. FMNH2 is required as a cofactor.

The enzyme catalyses 5-O-(1-carboxyvinyl)-3-phosphoshikimate = chorismate + phosphate. Its pathway is metabolic intermediate biosynthesis; chorismate biosynthesis; chorismate from D-erythrose 4-phosphate and phosphoenolpyruvate: step 7/7. Its function is as follows. Catalyzes the anti-1,4-elimination of the C-3 phosphate and the C-6 proR hydrogen from 5-enolpyruvylshikimate-3-phosphate (EPSP) to yield chorismate, which is the branch point compound that serves as the starting substrate for the three terminal pathways of aromatic amino acid biosynthesis. This reaction introduces a second double bond into the aromatic ring system. The polypeptide is Chorismate synthase (Marinomonas sp. (strain MWYL1)).